The following is a 332-amino-acid chain: Ornithine carbamoyltransferase 1, catabolic (332 aa).

Carbamoyl phosphate contacts are provided by residues 56–59 (STRT), Q83, R107, and 134–137 (HPTQ). Residues N167, D231, and 235–236 (SM) each bind L-ornithine. Carbamoyl phosphate is bound by residues 273 to 274 (CL) and R318.

Belongs to the aspartate/ornithine carbamoyltransferase superfamily. OTCase family.

It localises to the cytoplasm. It carries out the reaction carbamoyl phosphate + L-ornithine = L-citrulline + phosphate + H(+). It functions in the pathway amino-acid degradation; L-arginine degradation via ADI pathway; carbamoyl phosphate from L-arginine: step 2/2. Reversibly catalyzes the transfer of the carbamoyl group from carbamoyl phosphate (CP) to the N(epsilon) atom of ornithine (ORN) to produce L-citrulline. This chain is Ornithine carbamoyltransferase 1, catabolic (arcB1), found in Streptococcus agalactiae serotype III (strain NEM316).